The following is a 193-amino-acid chain: E3 ubiquitin-protein ligase RMA2 (193 aa).

The segment at 21–75 (CNICLDQVRDPVVTLCGHLFCWPCIHKWTYASNNSRQRVDQYDHKREPPKCPVCK) adopts an RING-type zinc-finger fold. The chain crosses the membrane as a helical; Anchor for type IV membrane protein span at residues 175–192 (LSRVYLFLLCFMFMCLFL).

In terms of assembly, interacts with ERABP1. In terms of tissue distribution, barely detected in roots and limited to the root tips. Expressed in leaf hydathodes and in siliques.

Its subcellular location is the endoplasmic reticulum membrane. It catalyses the reaction S-ubiquitinyl-[E2 ubiquitin-conjugating enzyme]-L-cysteine + [acceptor protein]-L-lysine = [E2 ubiquitin-conjugating enzyme]-L-cysteine + N(6)-ubiquitinyl-[acceptor protein]-L-lysine.. It participates in protein modification; protein ubiquitination. In terms of biological role, E3 ubiquitin-protein ligase that promotes the ubiquitination and proteasomal degradation of the auxin-binding protein ERABP1. This Arabidopsis thaliana (Mouse-ear cress) protein is E3 ubiquitin-protein ligase RMA2 (RMA2).